The chain runs to 417 residues: Transmembrane protease serine 11G (417 aa).

Topologically, residues 1–21 are cytoplasmic; the sequence is MYQPGILVRRKRVWKPWTVAL. The helical; Signal-anchor for type II membrane protein transmembrane segment at 22 to 42 threads the bilayer; it reads ITVALLLALAVLIGLLVYFLV. Topologically, residues 43 to 417 are extracellular; sequence YDEKTHYYQA…RDWIKSKTSI (375 aa). The SEA domain maps to 46 to 165; the sequence is KTHYYQASFW…PYLREMNAAQ (120 aa). A glycan (N-linked (GlcNAc...) asparagine) is linked at asparagine 60. One can recognise a Peptidase S1 domain in the interval 186–416; that stretch reads IADGKPADKA…YRDWIKSKTS (231 aa). Cysteine 211 and cysteine 227 are joined by a disulfide. Catalysis depends on charge relay system residues histidine 226 and aspartate 271. 2 disulfides stabilise this stretch: cysteine 336-cysteine 352 and cysteine 363-cysteine 392. The active-site Charge relay system is the serine 367.

Belongs to the peptidase S1 family.

It localises to the membrane. The sequence is that of Transmembrane protease serine 11G (Tmprss11g) from Mus musculus (Mouse).